Here is a 260-residue protein sequence, read N- to C-terminus: 14-3-3-like protein (260 aa).

It belongs to the 14-3-3 family.

In Pisum sativum (Garden pea), this protein is 14-3-3-like protein.